A 360-amino-acid chain; its full sequence is Epoxyqueuosine reductase (360 aa).

Catalysis depends on D142, which acts as the Proton donor. A 4Fe-4S ferredoxin-type domain is found at 187–216; that stretch reads APTEPVTAHCGSCQACMDVCPTQAIVAPHR. Residues C196, C199, C202, C206, C222, C249, C252, and C256 each contribute to the [4Fe-4S] cluster site.

It belongs to the QueG family. In terms of assembly, monomer. It depends on cob(II)alamin as a cofactor. Requires [4Fe-4S] cluster as cofactor.

It localises to the cytoplasm. It catalyses the reaction epoxyqueuosine(34) in tRNA + AH2 = queuosine(34) in tRNA + A + H2O. The protein operates within tRNA modification; tRNA-queuosine biosynthesis. Its function is as follows. Catalyzes the conversion of epoxyqueuosine (oQ) to queuosine (Q), which is a hypermodified base found in the wobble positions of tRNA(Asp), tRNA(Asn), tRNA(His) and tRNA(Tyr). This is Epoxyqueuosine reductase from Alicycliphilus denitrificans (strain DSM 14773 / CIP 107495 / K601).